We begin with the raw amino-acid sequence, 152 residues long: Ribosome maturation factor RimP (152 aa).

It belongs to the RimP family.

It is found in the cytoplasm. Functionally, required for maturation of 30S ribosomal subunits. This Pseudoalteromonas atlantica (strain T6c / ATCC BAA-1087) protein is Ribosome maturation factor RimP.